Here is a 414-residue protein sequence, read N- to C-terminus: Bifunctional protein GlmU (414 aa).

The pyrophosphorylase stretch occupies residues 1-208; the sequence is MDAVILCAGS…SSKLYGIELN (208 aa). Residues 6–9, Gln74, and Gly79 each bind UTP; that span reads LCAG. The N-acetyl-alpha-D-glucosamine 1-phosphate site is built by Thr80, Gly130, Asn142, and Asn162. A linker region spans residues 209 to 228; that stretch reads GYWNDIGRPWDVLSANNYFL. Residues 229–414 form an N-acetyltransferase region; sequence KNIMPKISGN…KDELIIKKRN (186 aa). The active-site Proton acceptor is the His312. Acetyl-CoA-binding residues include Ala388 and Lys405.

This sequence in the N-terminal section; belongs to the N-acetylglucosamine-1-phosphate uridyltransferase family. It in the C-terminal section; belongs to the transferase hexapeptide repeat family.

It catalyses the reaction N-acetyl-alpha-D-glucosamine 1-phosphate + UTP + H(+) = UDP-N-acetyl-alpha-D-glucosamine + diphosphate. The catalysed reaction is alpha-D-glucosamine 1-phosphate + acetyl-CoA = N-acetyl-alpha-D-glucosamine 1-phosphate + CoA + H(+). Its pathway is nucleotide-sugar biosynthesis; UDP-N-acetyl-alpha-D-glucosamine biosynthesis; N-acetyl-alpha-D-glucosamine 1-phosphate from alpha-D-glucosamine 6-phosphate (route II): step 2/2. It participates in nucleotide-sugar biosynthesis; UDP-N-acetyl-alpha-D-glucosamine biosynthesis; UDP-N-acetyl-alpha-D-glucosamine from N-acetyl-alpha-D-glucosamine 1-phosphate: step 1/1. Catalyzes the last two sequential reactions in the de novo biosynthetic pathway for UDP-N-acetyl-glucosamine (UDP-GlcNAc). Responsible for the acetylation of GlcN-1-P to GlcNAc-1-P, and for the uridyl transfer from UTP to GlcNAc-1-P, to produce UDP-GlcNAc and pyrophosphate. In Methanococcus vannielii (strain ATCC 35089 / DSM 1224 / JCM 13029 / OCM 148 / SB), this protein is Bifunctional protein GlmU.